The chain runs to 89 residues: Small ribosomal subunit protein uS14 (89 aa).

Zn(2+)-binding residues include Cys-52, Cys-55, Cys-68, and Cys-71.

It belongs to the universal ribosomal protein uS14 family. As to quaternary structure, part of the 30S ribosomal subunit. Contacts proteins S3 and S10. It depends on Zn(2+) as a cofactor.

In terms of biological role, binds 16S rRNA, required for the assembly of 30S particles and may also be responsible for determining the conformation of the 16S rRNA at the A site. In Salinibacter ruber (strain DSM 13855 / M31), this protein is Small ribosomal subunit protein uS14 (rpsN).